Reading from the N-terminus, the 424-residue chain is GTPase Obg (424 aa).

An Obg domain is found at 2-158 (AKFIDQVKIM…YEANIVLKIL (157 aa)). The OBG-type G domain occupies 159–326 (SDVGLVGLPS…LKKIIWEFLE (168 aa)). GTP contacts are provided by residues 165–172 (GLPSCGKS), 190–194 (FTTLV), 211–214 (DLPG), 280–283 (NKSD), and 307–309 (SAL). Positions 172 and 192 each coordinate Mg(2+). The 79-residue stretch at 344–422 (KEINYEPDFV…IYQHKFEWEE (79 aa)) folds into the OCT domain.

The protein belongs to the TRAFAC class OBG-HflX-like GTPase superfamily. OBG GTPase family. As to quaternary structure, monomer. The cofactor is Mg(2+).

It localises to the cytoplasm. An essential GTPase which binds GTP, GDP and possibly (p)ppGpp with moderate affinity, with high nucleotide exchange rates and a fairly low GTP hydrolysis rate. Plays a role in control of the cell cycle, stress response, ribosome biogenesis and in those bacteria that undergo differentiation, in morphogenesis control. The polypeptide is GTPase Obg (Mycoplasmopsis synoviae (strain 53) (Mycoplasma synoviae)).